A 475-amino-acid polypeptide reads, in one-letter code: Erythroid membrane-associated protein (475 aa).

A signal peptide spans 1 to 29; that stretch reads MEMASSAGSWLSGCLIPLVFLRLSVHVSG. Residues 30–140 form the Ig-like V-type domain; that stretch reads HAGDAGKFHV…GNLSKEDTVI (111 aa). Topologically, residues 30–155 are extracellular; that stretch reads HAGDAGKFHV…PSVGSLSPSA (126 aa). An intrachain disulfide couples Cys-50 to Cys-126. Residue Asn-132 is glycosylated (N-linked (GlcNAc...) asparagine). Residues 156–176 form a helical membrane-spanning segment; sequence VALAVILPVLVLLIMVCLCLI. Topologically, residues 177 to 475 are cytoplasmic; it reads WKQRRAKEKL…ALQELKAPSF (299 aa). In terms of domain architecture, B30.2/SPRY spans 220-418; sequence KLKRAAANSG…LVICSELHKS (199 aa). At Ser-418 the chain carries Phosphoserine.

This sequence belongs to the immunoglobulin superfamily. BTN/MOG family. Post-translationally, glycosylated. In terms of tissue distribution, expressed in erythroid-enriched bone marrow (at protein level). Highly expressed in bone marrow and to a lower extent in leukocytes, thymus, lymph node and spleen.

It localises to the cell membrane. The protein localises to the cytoplasm. Its function is as follows. Possible role as a cell-adhesion or receptor molecule of erythroid cells. The sequence is that of Erythroid membrane-associated protein (ERMAP) from Homo sapiens (Human).